We begin with the raw amino-acid sequence, 514 residues long: Protein translocase subunit SecD (514 aa).

Transmembrane regions (helical) follow at residues Trp-7 to Phe-27, Ile-357 to Phe-377, Val-389 to Ile-409, Phe-448 to Val-470, and Ile-482 to Trp-502.

Belongs to the SecD/SecF family. SecD subfamily. In terms of assembly, forms a complex with SecF. Part of the essential Sec protein translocation apparatus which comprises SecA, SecYEG and auxiliary proteins SecDF-YajC and YidC.

Its subcellular location is the cell inner membrane. Part of the Sec protein translocase complex. Interacts with the SecYEG preprotein conducting channel. SecDF uses the proton motive force (PMF) to complete protein translocation after the ATP-dependent function of SecA. In Rickettsia bellii (strain RML369-C), this protein is Protein translocase subunit SecD.